The primary structure comprises 507 residues: Fumarate hydratase, mitochondrial (507 aa).

The N-terminal 41 residues, 1 to 41, are a transit peptide targeting the mitochondrion; it reads MNRAFCLLARSRRFPRVPSAGAVLSGEAATLPRCAPNVVRM. N6-acetyllysine; alternate occurs at positions 58, 63, and 77. Lys58, Lys63, and Lys77 each carry N6-succinyllysine; alternate. Thr82 is subject to Phosphothreonine. An N6-acetyllysine modification is found at Lys91. N6-acetyllysine; alternate is present on residues Lys112 and Lys119. 2 positions are modified to N6-succinyllysine; alternate: Lys112 and Lys119. Substrate-binding positions include 142-144, 173-176, and 183-185; these read SGT, HPND, and SSN. Lys210 carries the N6-acetyllysine modification. Lys220 bears the N6-acetyllysine; alternate mark. Lys220 is modified (N6-succinyllysine; alternate). Thr231 lines the substrate pocket. The active-site Proton donor/acceptor is His232. Thr233 carries the post-translational modification Phosphothreonine. Residue Lys289 is modified to N6-acetyllysine; alternate. Lys289 carries the post-translational modification N6-succinyllysine; alternate. The active site involves Ser362. Residues Ser363 and 368-370 contribute to the substrate site; that span reads KVN. Ser363 carries the phosphoserine modification. An N6-succinyllysine mark is found at Lys464 and Lys470. Lys499 bears the N6-acetyllysine mark.

It belongs to the class-II fumarase/aspartase family. Fumarase subfamily. As to quaternary structure, homotetramer. Interacts with H2AZ1. Post-translationally, phosphorylation at Thr-233 by PRKDC in response to DNA damage promotes translocation to the nucleus and recruitment to DNA double-strand breaks (DSBs).

The protein resides in the mitochondrion. It localises to the cytoplasm. It is found in the cytosol. The protein localises to the nucleus. Its subcellular location is the chromosome. It carries out the reaction (S)-malate = fumarate + H2O. Its pathway is carbohydrate metabolism; tricarboxylic acid cycle; (S)-malate from fumarate: step 1/1. Catalyzes the reversible stereospecific interconversion of fumarate to L-malate. Experiments in other species have demonstrated that specific isoforms of this protein act in defined pathways and favor one direction over the other. Its function is as follows. Catalyzes the hydration of fumarate to L-malate in the tricarboxylic acid (TCA) cycle to facilitate a transition step in the production of energy in the form of NADH. Functionally, catalyzes the dehydration of L-malate to fumarate. Fumarate metabolism in the cytosol plays a role during urea cycle and arginine metabolism; fumarate being a by-product of the urea cycle and amino-acid catabolism. Also plays a role in DNA repair by promoting non-homologous end-joining (NHEJ). In response to DNA damage and phosphorylation by PRKDC, translocates to the nucleus and accumulates at DNA double-strand breaks (DSBs): acts by catalyzing formation of fumarate, an inhibitor of KDM2B histone demethylase activity, resulting in enhanced dimethylation of histone H3 'Lys-36' (H3K36me2). The polypeptide is Fumarate hydratase, mitochondrial (Rattus norvegicus (Rat)).